Here is a 330-residue protein sequence, read N- to C-terminus: uncharacterized protein (330 aa).

Disordered stretches follow at residues valine 136–serine 160 and aspartate 172–asparagine 314. The span at proline 223–proline 235 shows a compositional bias: pro residues. Over residues isoleucine 236–threonine 246 the composition is skewed to low complexity. 3 stretches are compositionally biased toward polar residues: residues alanine 263–glutamate 276, threonine 284–valine 294, and proline 304–asparagine 314.

This is an uncharacterized protein from Danio rerio (Zebrafish).